Here is a 357-residue protein sequence, read N- to C-terminus: Set1 complex component swd2 (357 aa).

WD repeat units lie at residues 24 to 65, 110 to 149, 199 to 241, and 247 to 289; these read NFVG…KSLA, GHKQ…CQGL, PPHV…RVPS, and TQDG…QTVN.

The protein belongs to the WD repeat SWD2 family. Component of the Set1 complex composed of ash2, sdc1, set1, shg1, spp1, swd1, swd2 and swd3.

The protein localises to the nucleus. Its function is as follows. The Set1 complex specifically methylates 'Lys-4' of histone H3. This Schizosaccharomyces pombe (strain 972 / ATCC 24843) (Fission yeast) protein is Set1 complex component swd2.